The sequence spans 438 residues: Transcriptional regulator Mb0495 (438 aa).

Over residues methionine 1–serine 12 the composition is skewed to polar residues. The segment at methionine 1 to arginine 22 is disordered. A DNA-binding region (H-T-H motif) is located at residues valine 52 to isoleucine 73.

Belongs to the ROK (NagC/XylR) family.

Functionally, positively regulates the expression of PE13 and PPE18. The polypeptide is Transcriptional regulator Mb0495 (Mycobacterium bovis (strain ATCC BAA-935 / AF2122/97)).